The chain runs to 216 residues: Pyrophosphatase PpaX (216 aa).

The Nucleophile role is filled by aspartate 9.

This sequence belongs to the HAD-like hydrolase superfamily. PpaX family. Mg(2+) serves as cofactor.

It carries out the reaction diphosphate + H2O = 2 phosphate + H(+). Hydrolyzes pyrophosphate formed during P-Ser-HPr dephosphorylation by HPrK/P. Might play a role in controlling the intracellular pyrophosphate pool. The chain is Pyrophosphatase PpaX from Bacillus cereus (strain G9842).